The primary structure comprises 191 residues: Molybdenum cofactor guanylyltransferase (191 aa).

Residues Leu-13–Gly-15, Lys-26, Asp-72, and Asp-102 each bind GTP. Position 102 (Asp-102) interacts with Mg(2+).

It belongs to the MobA family. In terms of assembly, monomer. Mg(2+) serves as cofactor.

Its subcellular location is the cytoplasm. The catalysed reaction is Mo-molybdopterin + GTP + H(+) = Mo-molybdopterin guanine dinucleotide + diphosphate. Its function is as follows. Transfers a GMP moiety from GTP to Mo-molybdopterin (Mo-MPT) cofactor (Moco or molybdenum cofactor) to form Mo-molybdopterin guanine dinucleotide (Mo-MGD) cofactor. In Pseudomonas putida (strain GB-1), this protein is Molybdenum cofactor guanylyltransferase.